The following is a 400-amino-acid chain: NADH-quinone oxidoreductase subunit D (400 aa).

This sequence belongs to the complex I 49 kDa subunit family. NDH-1 is composed of 14 different subunits. Subunits NuoB, C, D, E, F, and G constitute the peripheral sector of the complex.

The protein localises to the cell inner membrane. It catalyses the reaction a quinone + NADH + 5 H(+)(in) = a quinol + NAD(+) + 4 H(+)(out). In terms of biological role, NDH-1 shuttles electrons from NADH, via FMN and iron-sulfur (Fe-S) centers, to quinones in the respiratory chain. The immediate electron acceptor for the enzyme in this species is believed to be a menaquinone. Couples the redox reaction to proton translocation (for every two electrons transferred, four hydrogen ions are translocated across the cytoplasmic membrane), and thus conserves the redox energy in a proton gradient. The protein is NADH-quinone oxidoreductase subunit D of Pelodictyon phaeoclathratiforme (strain DSM 5477 / BU-1).